Consider the following 230-residue polypeptide: LexA repressor (230 aa).

The disordered stretch occupies residues 1 to 21 (MSDDSSETRTGGRRGADAGLT). The segment at residues 44-64 (IREIGDAVGLTSTSSVAHQLR) is a DNA-binding region (H-T-H motif). Active-site for autocatalytic cleavage activity residues include serine 154 and lysine 191.

Belongs to the peptidase S24 family. In terms of assembly, homodimer.

The catalysed reaction is Hydrolysis of Ala-|-Gly bond in repressor LexA.. In terms of biological role, represses a number of genes involved in the response to DNA damage (SOS response), including recA and lexA. In the presence of single-stranded DNA, RecA interacts with LexA causing an autocatalytic cleavage which disrupts the DNA-binding part of LexA, leading to derepression of the SOS regulon and eventually DNA repair. This chain is LexA repressor, found in Mycobacterium sp. (strain JLS).